Consider the following 459-residue polypeptide: Sulfite oxidase (459 aa).

One can recognise a Cytochrome b5 heme-binding domain in the interval 4 to 83 (YPRYTREEVG…LQQYKVGELS (80 aa)). Residues His40, His65, and His69 each coordinate heme b. Residues 83–115 (SPDEAPAAPDAQDPFAGDPPRHPGLRVNSQKPF) form a disordered region. Low complexity predominate over residues 85-100 (DEAPAAPDAQDPFAGD). The segment at 86 to 95 (EAPAAPDAQD) is hinge. Positions 96–323 (PFAGDPPRHP…PSRWQQNDYK (228 aa)) are moco domain. Residues 136–140 (FTRNH), Cys185, Asp244, His283, Arg288, and 299–301 (SVK) each bind Mo-molybdopterin. Residues 324 to 459 (GFSPCVDWDT…RGVLSTAWHR (136 aa)) are homodimerization.

As to quaternary structure, homodimer. It depends on heme b as a cofactor. The cofactor is Mo-molybdopterin.

The protein localises to the mitochondrion intermembrane space. It carries out the reaction sulfite + O2 + H2O = sulfate + H2O2. Its pathway is energy metabolism; sulfur metabolism. Functionally, catalyzes the oxidation of sulfite to sulfate, the terminal reaction in the oxidative degradation of sulfur-containing amino acids. The protein is Sulfite oxidase (SUOX) of Gallus gallus (Chicken).